Reading from the N-terminus, the 659-residue chain is 4-alpha-glucanotransferase (659 aa).

Glutamate 123 functions as the Nucleophile in the catalytic mechanism. Aspartate 214 serves as the catalytic Proton donor.

It belongs to the glycosyl hydrolase 57 family. As to quaternary structure, homodimer.

The catalysed reaction is Transfers a segment of a (1-&gt;4)-alpha-D-glucan to a new position in an acceptor, which may be glucose or a (1-&gt;4)-alpha-D-glucan.. With respect to regulation, inhibited by p-chloromercuribenzoic acid, monoiodoacetic acid, mercury and nickel ions. Its function is as follows. Catalyzes the transglycosylation of maltooligosaccharides, yielding maltooligosaccharides of various lengths and glucose. Maltose and glucose can be used as acceptors in the transfer reaction. The sequence is that of 4-alpha-glucanotransferase (jgt) from Thermococcus litoralis (strain ATCC 51850 / DSM 5473 / JCM 8560 / NS-C).